A 94-amino-acid chain; its full sequence is Co-chaperonin GroES (94 aa).

Belongs to the GroES chaperonin family. Heptamer of 7 subunits arranged in a ring. Interacts with the chaperonin GroEL.

It localises to the cytoplasm. In terms of biological role, together with the chaperonin GroEL, plays an essential role in assisting protein folding. The GroEL-GroES system forms a nano-cage that allows encapsulation of the non-native substrate proteins and provides a physical environment optimized to promote and accelerate protein folding. GroES binds to the apical surface of the GroEL ring, thereby capping the opening of the GroEL channel. This chain is Co-chaperonin GroES, found in Exiguobacterium sp. (strain ATCC BAA-1283 / AT1b).